Here is a 348-residue protein sequence, read N- to C-terminus: Selenide, water dikinase (348 aa).

Cysteine 17 is an active-site residue. Residues lysine 20 and 47–49 (RAD) each bind ATP. Aspartate 50 is a binding site for Mg(2+). ATP-binding positions include aspartate 67, aspartate 90, and 138–140 (GHT). Residue aspartate 90 participates in Mg(2+) binding. Residue aspartate 226 coordinates Mg(2+).

Belongs to the selenophosphate synthase 1 family. Class I subfamily. Homodimer. Requires Mg(2+) as cofactor.

It catalyses the reaction hydrogenselenide + ATP + H2O = selenophosphate + AMP + phosphate + 2 H(+). In terms of biological role, synthesizes selenophosphate from selenide and ATP. The protein is Selenide, water dikinase of Pelobacter propionicus (strain DSM 2379 / NBRC 103807 / OttBd1).